We begin with the raw amino-acid sequence, 136 residues long: DNA-binding protein H-NS (136 aa).

A coiled-coil region spans residues 13 to 67; the sequence is TLRAQARECTLETLEEMLEKLEVVVNERREEDSQAQAEIEERTRKLQQYREMLIA. A DNA-binding region spans residues 113–118; the sequence is QGRTPA.

The protein belongs to the histone-like protein H-NS family. In terms of assembly, interacts with YmoA in the absence of DNA. Homodimer that oligomerizes on DNA into higher-order complexes that form bridges between disparate regions of DNA compacting it. Interacts with YmoA.

It localises to the cytoplasm. The protein localises to the nucleoid. A DNA-binding protein implicated in transcriptional repression and chromosome organization and compaction. Binds nucleation sites in AT-rich DNA and bridges them, forming higher-order nucleoprotein complexes and condensing the chromosome. As many horizontally transferred genes are AT-rich, it plays a central role in silencing foreign genes. A subset of genes are repressed by H-NS in association with YmoA. Complements a number of hns deficiencies in E.coli; represses the bgl operon, represses hemolysin expression. The protein is DNA-binding protein H-NS of Yersinia enterocolitica.